Consider the following 1837-residue polypeptide: AF4/FMR2 family member lilli (1837 aa).

Disordered regions lie at residues 1–25 (MAQQ…QQQQ), 65–109 (NLYS…PRRL), 162–295 (IQQQ…LHNG), 455–592 (QQLP…KKKY), 605–712 (TGLL…PGNV), 797–852 (PKSQ…LQIP), 868–1250 (NNMQ…GGAK), 1267–1311 (QQQQ…GLAS), and 1344–1466 (APSS…DPML). Positions 16-25 (HQQQQQQQQQ) are enriched in low complexity. The segment covering 84-109 (REKYERQQGIQSDDRETSLFSEPRRL) has biased composition (basic and acidic residues). 3 stretches are compositionally biased toward low complexity: residues 162–179 (IQQQ…VASS), 187–200 (QTQQ…QQQQ), and 247–264 (NSNS…SSSS). Phosphothreonine is present on T468. The segment covering 475 to 488 (LKIEKNPILEKQDS) has biased composition (basic and acidic residues). The span at 490 to 500 (LENDLELSESE) shows a compositional bias: acidic residues. S497 and S499 each carry phosphoserine. Composition is skewed to low complexity over residues 509 to 529 (SPGS…SESS) and 542 to 552 (QQQQQTQQQQL). The segment covering 553–563 (HGHHPQSHHHQ) has biased composition (basic residues). The segment covering 564-583 (QFLQQQLQRQQQQQQQQQQL) has biased composition (low complexity). 2 stretches are compositionally biased toward gly residues: residues 612-633 (GGLG…GNGG) and 641-673 (GSMG…GIGS). Polar residues-rich tracts occupy residues 678-690 (NKTP…NKWN) and 698-711 (PTSQ…SPGN). Positions 815–837 (SESATSGSSSSSCSSSDSAASAS) are enriched in low complexity. Residues 868 to 880 (NNMQKSQSMSVTV) show a composition bias toward polar residues. Residues 892–902 (PRQKKPRKKKM) are compositionally biased toward basic residues. S913 and S914 each carry phosphoserine. Composition is skewed to low complexity over residues 927-951 (VVAQ…ATTT) and 961-1013 (QQQQ…SSVL). Residues 952–964 (KKGRGRPRKQQQQ) constitute a DNA-binding region (a.T hook). Phosphoserine occurs at positions 974 and 976. The segment covering 1021–1033 (SQSSSNGNTPTKK) has biased composition (polar residues). 4 stretches are compositionally biased toward low complexity: residues 1034-1049 (MSSI…SAAA), 1056-1091 (AVAA…SSSS), 1130-1139 (GSSSPTSSSS), and 1157-1173 (ISNS…VNNN). The span at 1174-1184 (LQQQAMPQQSP) shows a compositional bias: polar residues. The span at 1189–1212 (LSGGSQQLSSSDSSSSSSGSSSSS) shows a compositional bias: low complexity. Residues 1217 to 1234 (DAKREKNRERKPKSDKNK) show a composition bias toward basic and acidic residues. Over residues 1267–1276 (QQQQQQQQVQ) the composition is skewed to low complexity. A compositionally biased stretch (polar residues) spans 1345 to 1355 (PSSSNQQNGHL). The segment covering 1373–1386 (KVKHEHHQLHHHSQ) has biased composition (basic residues). Composition is skewed to basic and acidic residues over residues 1393–1407 (VKPE…ETKF) and 1416–1432 (FQLK…ERDQ). S1517 bears the Phosphoserine mark. The span at 1550-1560 (AVQTTPPTSVT) shows a compositional bias: polar residues. Disordered regions lie at residues 1550-1571 (AVQT…LVSQ) and 1727-1756 (GNTP…IVPQ). Positions 1727–1747 (GNTPSSISPSNSVGSQGSGSN) are enriched in low complexity.

This sequence belongs to the AF4 family.

It localises to the nucleus. Its function is as follows. Has a role in transcriptional regulation. Acts in parallel with the Ras/MAPK and the PI3K/PKB pathways in the control of cell identity and cellular growth. Essential for regulation of the cytoskeleton and cell growth but not for cell proliferation or growth rate. Required specifically for the microtubule-based basal transport of lipid droplets. Plays a partially redundant function downstream of Raf in cell fate specification in the developing eye. Pair-rule protein that regulates embryonic cellularization, gastrulation and segmentation. This Drosophila willistoni (Fruit fly) protein is AF4/FMR2 family member lilli.